The chain runs to 326 residues: Target of rapamycin complex subunit LST8 (326 aa).

M1 is modified (N-acetylmethionine). WD repeat units follow at residues 1-37, 40-80, 83-122, 126-165, and 168-207; these read MNTS…CTRT, HQDS…PIIS, GVNK…LQCQ, QVNA…NEQL, and EPEV…GDEV. T51 carries the post-translational modification Phosphothreonine. K86 is covalently cross-linked (Glycyl lysine isopeptide (Lys-Gly) (interchain with G-Cter in SUMO3)). Glycyl lysine isopeptide (Lys-Gly) (interchain with G-Cter in SUMO3) cross-links involve residues K215, K245, and K261. The stretch at 218-257 is one WD 6 repeat; the sequence is AHTRYALQCRFSPDSTLLATCSADQTCKIWRTSNFSLMTE. One copy of the WD 7 repeat lies at 268–309; that stretch reads SSRGWMWGCAFSGDSQYIVTASSDNLARLWCVETGEIKREYG. A Glycyl lysine isopeptide (Lys-Gly) (interchain with G-Cter in SUMO3); alternate cross-link involves residue K305. Residues K305 and K313 each participate in a glycyl lysine isopeptide (Lys-Gly) (interchain with G-Cter in ubiquitin); alternate cross-link. K313 participates in a covalent cross-link: Glycyl lysine isopeptide (Lys-Gly) (interchain with G-Cter in SUMO1); alternate.

It belongs to the WD repeat LST8 family. Part of the mechanistic target of rapamycin complex 1 (mTORC1) which contains MTOR, MLST8 and RPTOR. mTORC1 associates with AKT1S1/PRAS40, which inhibits its activity. mTORC1 binds to and is inhibited by FKBP12-rapamycin. Within mTORC1, interacts directly with MTOR and RPTOR. Component of the mechanistic target of rapamycin complex 2 (mTORC2), consisting in two heterotretramers composed of MTOR, MLST8, RICTOR and MAPKAP1/SIN1. Contrary to mTORC1, mTORC2 does not bind to and is not sensitive to FKBP12-rapamycin. mTORC1 and mTORC2 associate with DEPTOR, which regulates their activity. Interacts with RHEB. Interacts with MEAK7. Interacts with SIK3. Interacts with SLC38A7; this interaction promotes the recruitment of mTORC1 to the lysosome and its subsequent activation. Post-translationally, phosphorylation at Thr-51 by CDK1 promotes ubiquitination by the SCF(FBXW7) complex, followed by degradation. In terms of processing, ubiquitination by the SCF(FBXW7) and SCF(FBXW11) complexes following phosphorylation at Thr-51 by CDK1, leads to its degradation by the proteasome. Ubiquitination at Lys-305 and Lys-313 by TRAF2 via 'Lys-63'-linked polyubiquitin chains inhibits formation of the mTORC2 complex, while promoting formation of the mTORC1 complex: ubiquitination disrupts the interaction between MLST8 and MAPKAP1/SIN1 to favor mTORC1 assembly. Deubiquitination at Lys-305 and Lys-313 by OTUD7B promotes MLST8 interaction with MAPKAP1/SIN1, facilitating mTORC2 assembly. Sumoylation with SUMO1, SUMO2 and SUMO3 promotes assembly of both mTORC1 and mTORC2 complexes.

It is found in the lysosome membrane. The protein resides in the cytoplasm. Functionally, subunit of both mTORC1 and mTORC2, which regulates cell growth and survival in response to nutrient and hormonal signals. mTORC1 is activated in response to growth factors or amino acids. In response to nutrients, mTORC1 is recruited to the lysosome membrane and promotes protein, lipid and nucleotide synthesis by phosphorylating several substrates, such as ribosomal protein S6 kinase (RPS6KB1 and RPS6KB2) and EIF4EBP1 (4E-BP1). In the same time, it inhibits catabolic pathways by phosphorylating the autophagy initiation components ULK1 and ATG13, as well as transcription factor TFEB, a master regulators of lysosomal biogenesis and autophagy. The mTORC1 complex is inhibited in response to starvation and amino acid depletion. Within mTORC1, MLST8 interacts directly with MTOR and enhances its kinase activity. In nutrient-poor conditions, stabilizes the MTOR-RPTOR interaction and favors RPTOR-mediated inhibition of MTOR activity. As part of the mTORC2 complex, transduces signals from growth factors to pathways involved in proliferation, cytoskeletal organization, lipogenesis and anabolic output. mTORC2 is also activated by growth factors, but seems to be nutrient-insensitive. In response to growth factors, mTORC2 phosphorylates and activates AGC protein kinase family members, including AKT (AKT1, AKT2 and AKT3), PKC (PRKCA, PRKCB and PRKCE) and SGK1. mTORC2 functions upstream of Rho GTPases to regulate the actin cytoskeleton, probably by activating one or more Rho-type guanine nucleotide exchange factors. mTORC2 promotes the serum-induced formation of stress-fibers or F-actin. mTORC2 plays a critical role in AKT1 activation by mediating phosphorylation of different sites depending on the context, such as 'Thr-450', 'Ser-473', 'Ser-477' or 'Thr-479', facilitating the phosphorylation of the activation loop of AKT1 on 'Thr-308' by PDPK1/PDK1 which is a prerequisite for full activation. mTORC2 regulates the phosphorylation of SGK1 at 'Ser-422'. mTORC2 also modulates the phosphorylation of PRKCA on 'Ser-657'. Within mTORC2, MLST8 acts as a bridge between MAPKAP1/SIN1 and MTOR. The chain is Target of rapamycin complex subunit LST8 from Bos taurus (Bovine).